The sequence spans 201 residues: UPF0301 protein Rleg2_0617 (201 aa).

Belongs to the UPF0301 (AlgH) family.

In Rhizobium leguminosarum bv. trifolii (strain WSM2304), this protein is UPF0301 protein Rleg2_0617.